Reading from the N-terminus, the 350-residue chain is Dihydroorotase (350 aa).

The Zn(2+) site is built by H17 and H19. Substrate contacts are provided by residues 19–21 (HLR) and N45. Zn(2+) is bound by residues K103, H140, and H178. The residue at position 103 (K103) is an N6-carboxylysine. H140 is a binding site for substrate. L224 serves as a coordination point for substrate. Residue D252 coordinates Zn(2+). The active site involves D252. Residues H256 and A268 each coordinate substrate.

Belongs to the metallo-dependent hydrolases superfamily. DHOase family. Class II DHOase subfamily. As to quaternary structure, homodimer. The cofactor is Zn(2+).

The catalysed reaction is (S)-dihydroorotate + H2O = N-carbamoyl-L-aspartate + H(+). It participates in pyrimidine metabolism; UMP biosynthesis via de novo pathway; (S)-dihydroorotate from bicarbonate: step 3/3. Its function is as follows. Catalyzes the reversible cyclization of carbamoyl aspartate to dihydroorotate. The protein is Dihydroorotase of Buchnera aphidicola subsp. Acyrthosiphon pisum (strain APS) (Acyrthosiphon pisum symbiotic bacterium).